The sequence spans 362 residues: Uroporphyrinogen decarboxylase (362 aa).

Residues 39 to 43 (RQAGR), D88, Y165, T220, and H334 each bind substrate.

Belongs to the uroporphyrinogen decarboxylase family. As to quaternary structure, homodimer.

It is found in the cytoplasm. The catalysed reaction is uroporphyrinogen III + 4 H(+) = coproporphyrinogen III + 4 CO2. Its pathway is porphyrin-containing compound metabolism; protoporphyrin-IX biosynthesis; coproporphyrinogen-III from 5-aminolevulinate: step 4/4. Catalyzes the decarboxylation of four acetate groups of uroporphyrinogen-III to yield coproporphyrinogen-III. This chain is Uroporphyrinogen decarboxylase, found in Synechococcus sp. (strain JA-3-3Ab) (Cyanobacteria bacterium Yellowstone A-Prime).